The chain runs to 64 residues: U-myrmeciitoxin(01)-Mg4b (64 aa).

A signal peptide spans 1-25 (MGKIFFFVLMIAIIGSTFLIEEALG).

This sequence belongs to the ant myrmeciitoxin-01 family. Homodimer; disulfide-linked. Post-translationally, contains 2 intrachain disulfide bonds (per chain) and 1 interchain disulfide bond. As to expression, expressed by the venom gland.

The protein resides in the secreted. Functionally, may have antimicrobial properties, like most ant linear peptides. This chain is U-myrmeciitoxin(01)-Mg4b, found in Myrmecia gulosa (Red bulldog ant).